A 161-amino-acid chain; its full sequence is Glycine cleavage system H protein 3 (161 aa).

Positions 40-122 (TVTLGLTDVG…YGDAWIVKIK (83 aa)) constitute a Lipoyl-binding domain. The residue at position 81 (Lys-81) is an N6-lipoyllysine.

The protein belongs to the GcvH family. The glycine cleavage system is composed of four proteins: P, T, L and H. (R)-lipoate serves as cofactor.

Its function is as follows. The glycine cleavage system catalyzes the degradation of glycine. The H protein shuttles the methylamine group of glycine from the P protein to the T protein. This chain is Glycine cleavage system H protein 3, found in Aquifex aeolicus (strain VF5).